The primary structure comprises 720 residues: Collectin-12 (720 aa).

Topologically, residues 1 to 37 (MKDDFNDEEEVQSFGYKRFGIQEGNECTKCKNDWALR) are cytoplasmic. The chain crosses the membrane as a helical; Signal-anchor for type II membrane protein span at residues 38-58 (VAIALLYVLCALLTIAVAVLG). Residues 59–720 (YKVVQRMDNV…RTNESKVPVL (662 aa)) lie on the Extracellular side of the membrane. 3 coiled-coil regions span residues 95-120 (EKSE…QLSD), 216-267 (ISSL…LAAN), and 377-408 (LHGL…LDKE). Positions 433 to 576 (FTILQGPPGP…GPPGLPGLPA (144 aa)) are disordered. Collagen-like domains lie at 444 to 503 (GPRG…PGPK) and 510 to 569 (GRQG…PGPP). Basic and acidic residues predominate over residues 460 to 479 (PKGEKGEKGAPGDAGPKGEK). The span at 488–503 (PGLKGPPGSRGSPGPK) shows a compositional bias: low complexity. The segment covering 504–513 (GSRGSGGRQG) has biased composition (gly residues). Positions 527 to 560 (PGRDGQPGPTGPQGPQGLRGPAGPAGLEGARGPV) are enriched in low complexity. Pro residues predominate over residues 562–576 (PIGPPGPPGLPGLPA). 3 disulfides stabilise this stretch: cysteine 604/cysteine 615, cysteine 634/cysteine 709, and cysteine 687/cysteine 701. One can recognise a C-type lectin domain in the interval 611-710 (FREQCYHFSA…CTERIGFICE (100 aa)). Residues isoleucine 643, asparagine 645, and glutamate 649 each coordinate Ca(2+). A carbohydrate contacts are provided by lysine 670, glutamine 673, and aspartate 675. Residues glutamine 673, aspartate 675, asparagine 676, glutamate 685, aspartate 686, asparagine 697, aspartate 698, and glutamate 710 each coordinate Ca(2+). Glutamate 685 contacts a carbohydrate. Residues asparagine 697 and aspartate 698 each coordinate a carbohydrate.

The protein localises to the membrane. Functionally, scavenger receptor that displays several functions associated with host defense. Binds to carbohydrates. This is Collectin-12 (colec12) from Danio rerio (Zebrafish).